Here is a 262-residue protein sequence, read N- to C-terminus: Adenosylcobinamide-GDP ribazoletransferase (262 aa).

8 helical membrane-spanning segments follow: residues 4–26, 37–57, 59–79, 112–132, 139–159, 183–203, 205–225, and 237–257; these read AWNG…SIAW, CMPL…ALFS, FSFS…IWMA, VGAF…LFLY, IPPA…AWLL, AIWA…STAI, VQTG…AKPW, and VLGA…WLLH.

It belongs to the CobS family. Mg(2+) serves as cofactor.

It localises to the cell membrane. It carries out the reaction alpha-ribazole + adenosylcob(III)inamide-GDP = adenosylcob(III)alamin + GMP + H(+). The catalysed reaction is alpha-ribazole 5'-phosphate + adenosylcob(III)inamide-GDP = adenosylcob(III)alamin 5'-phosphate + GMP + H(+). It functions in the pathway cofactor biosynthesis; adenosylcobalamin biosynthesis; adenosylcobalamin from cob(II)yrinate a,c-diamide: step 7/7. Functionally, joins adenosylcobinamide-GDP and alpha-ribazole to generate adenosylcobalamin (Ado-cobalamin). Also synthesizes adenosylcobalamin 5'-phosphate from adenosylcobinamide-GDP and alpha-ribazole 5'-phosphate. The polypeptide is Adenosylcobinamide-GDP ribazoletransferase (Geobacillus kaustophilus (strain HTA426)).